A 315-amino-acid chain; its full sequence is uncharacterized protein (315 aa).

A run of 3 helical transmembrane segments spans residues 19–39, 56–76, and 81–101; these read IGAGAATIASAGAAIGIGNVF, TVLVVTLTLLGGVAAFYLHSF, and PLKKIIYLFLVFFIAVGISLI. Positions 154-171 are enriched in polar residues; that stretch reads EDSASSGRTSSSVNQPIQ. The interval 154–214 is disordered; sequence EDSASSGRTS…EREARAQEHD (61 aa). The segment covering 203–214 has biased composition (basic and acidic residues); it reads GGEREARAQEHD.

It belongs to the ATPase C chain family.

The protein resides in the mitochondrion membrane. This is an uncharacterized protein from Arabidopsis thaliana (Mouse-ear cress).